A 4059-amino-acid polypeptide reads, in one-letter code: Fibrocystin (4059 aa).

Residues 1–18 (MMLAWLVSLLSMEVLLLA) form the signal peptide. Residues 19 to 3851 (KPYSSFQFEP…LPVASKERST (3833 aa)) are Extracellular-facing. Positions 25 to 109 (QFEPAEGSLA…AGPYSLEMRS (85 aa)) constitute an IPT/TIG 1; atypical domain. Asn-55 and Asn-224 each carry an N-linked (GlcNAc...) asparagine glycan. 2 consecutive IPT/TIG domains span residues 135–230 (PVLY…FSVF) and 257–333 (PEIL…FEVG). A PA14 domain is found at 323 to 483 (AGNRGLRFEV…TWLNPDVVNT (161 aa)). 33 N-linked (GlcNAc...) asparagine glycosylation sites follow: Asn-355, Asn-385, Asn-518, Asn-527, Asn-620, Asn-639, Asn-709, Asn-867, Asn-965, Asn-975, Asn-1082, Asn-1114, Asn-1133, Asn-1239, Asn-1273, Asn-1308, Asn-1319, Asn-1344, Asn-1373, Asn-1456, Asn-1471, Asn-1528, Asn-1613, Asn-1627, Asn-1694, Asn-1760, Asn-1775, Asn-1875, Asn-1879, Asn-1915, Asn-1955, Asn-2030, and Asn-2139. IPT/TIG domains lie at 945 to 997 (LVHF…FMLV) and 1017 to 1100 (PRLD…AFTY). The IPT/TIG 6; atypical domain maps to 1106 to 1190 (PVIVSLSRNR…IRSQGVDLYI (85 aa)). The 69-residue stretch at 1198 to 1266 (SVEPCSGSLL…RADVLTVLAS (69 aa)) folds into the IPT/TIG 7 domain. The 82-residue stretch at 1297–1378 (PVVTAMWGEF…MGFANMSVVP (82 aa)) folds into the IPT/TIG 8; atypical domain. Positions 1385–1466 (PQIIAIFPTH…ITVLVNGLTS (82 aa)) constitute an IPT/TIG 9 domain. IPT/TIG domains follow at residues 1482–1566 (PIVD…RNFF) and 1569–1637 (PQVL…IDVN). The 85-residue stretch at 1654–1738 (PELLSVSRSQ…VLRATVTSVT (85 aa)) folds into the IPT/TIG 12; atypical domain. Positions 1928–2049 (HSWFPQRVPH…PEVTVTYLQA (122 aa)) constitute a G8 1 domain. 2 PbH1 repeats span residues 2244 to 2266 (TWGLKVDSNVFYKIVGHALLLGS) and 2287 to 2321 (EQGSTIRNNVIISVSAAEGLSGSEMLAPAGIYTFS). Residue Asn-2380 is glycosylated (N-linked (GlcNAc...) asparagine). 2 PbH1 repeats span residues 2404–2426 (SNNLHLKNFQVYACRDFGIDILE) and 2459–2481 (RWELTISNTTFVNFDGNCVAIRT). N-linked (GlcNAc...) asparagine glycosylation is found at Asn-2466, Asn-2503, Asn-2529, Asn-2547, Asn-2581, Asn-2589, Asn-2627, Asn-2747, and Asn-2762. The G8 2 domain maps to 2741 to 2867 (KGWGGYNHTI…PKKSWVHLGA (127 aa)). 2 PbH1 repeats span residues 3004-3026 (SAGSWVISSTVHQSCSVGIHASS) and 3027-3049 (SHGVILTDNVVFGTNGHGIDVEG). The N-linked (GlcNAc...) asparagine glycan is linked to Asn-3051. Residues 3080 to 3102 (AEDIILHGNVVAGSERLGFHVGG) form a PbH1 7 repeat. Asn-3133 and Asn-3162 each carry an N-linked (GlcNAc...) asparagine glycan. Residues 3188–3212 (TVQITLRNSVIVATSSSFDCIHDRK) form a PbH1 8 repeat. Asn-3218, Asn-3719, and Asn-3831 each carry an N-linked (GlcNAc...) asparagine glycan. A helical transmembrane segment spans residues 3852-3872 (IILALSLCSVASWVALSCLVC). The segment at 3869–3886 (CLVCCWFKKSKTRKIKPE) is ciliary targeting sequence (CST). Residues 3873–4059 (CWFKKSKTRK…LHTAPPETIQ (187 aa)) are Cytoplasmic-facing. Over residues 3885-3898 (PEDISESQAKEQKK) the composition is skewed to basic and acidic residues. Residues 3885 to 3915 (PEDISESQAKEQKKNTHNSSKPRGLQAKTAK) are disordered. The segment at 3946-3970 (KRKVSRLAVTEERTTTPAPKIPRIT) is nuclear localization signal (NLS). The disordered stretch occupies residues 4015–4038 (QERKQGQEPSQLDKGSDCTGLSQE).

In terms of assembly, interacts with CAMLG. Interacts with PKD2. Interacts (via CST) with ARF4; this interaction allows an efficient PKHD1 trafficking to the cilium. Interacts (via CST) with RAB8A; this interaction controls trafficking through the endomembrane systeme and to the cilium. Interacts (via CST) with TULP3; this interaction allows PKHD1 trafficking to the cilium. In terms of processing, palmitoylated. Palmitoylation facilitates the trafficking to the cilia and membrane targeting. Post-translationally, N-glycosylated. Several proteolytic cleavages occur within the extracellular domain, whereas at least one cleavage occurs within the cytoplasmic domain. Cleaved by a probable proprotein convertase which produces an extracellular domain (polyductin extracellular domain, (PECD)) and a C-terminal fragment (polyductin transmembrane fragment (PTM)) which are tethered together by disulfide bonds. This extracellular domain (PECD) is then shed from the primary cilium by activation of a member of the ADAM metalloproteinase disintegrins family, resulting in concomitant release of an intra-cellular C-terminal fragment (ICD) via a gamma-secretase-dependent process. The proteolytic cleavage of the C-terminal intracellular fragment (ICD) is controlled by cytosolic calcium concentration and activation of PKC. In terms of tissue distribution, expressed in bile ducts and distal nephron segments but is absent from the proximal tubule. Expressed in pancreas and kidney but also in the liver. Expressed primarily in the distal tubule and thick ascending limb of the loop of Henle, and at low-level in the proximal tubule before renal development is complete at P0.

It is found in the cell membrane. The protein resides in the cytoplasm. Its subcellular location is the apical cell membrane. It localises to the cytoskeleton. The protein localises to the cilium basal body. It is found in the cell projection. The protein resides in the cilium. Its subcellular location is the spindle. It localises to the chromosome. The protein localises to the centromere. It is found in the nucleus. The protein resides in the secreted. Its subcellular location is the extracellular exosome. It localises to the endoplasmic reticulum. The protein localises to the golgi apparatus. Promotes ciliogenesis in renal epithelial cells and therefore participates in the tubules formation and/or ensures the maintenance of the architecture of the lumen of the kidney. Has an impact on cellular symmetry by ensuring correct bipolar cell division through the regulation of centrosome duplication and mitotic spindle assembly and by maintaining oriented cell division (OCD) during tubular elongation through planar cell polarity (PCP) pathway. During epithelial cell morphogenesis, it also regulates cell-cell and cell-matrix adhesion and participates in cell motility. Promotes cell-cell contact through the positive regulation of PTK2 kinase activity leading to either positive regulation of epithelial cell proliferation through the HRAS/RAF1 pathways, or negative regulation of apoptosis through the PDK1/AKT1 pathway. May act in collecting-duct and biliary differentiation. May participate in the regulation of the cholangiocytes proliferation and the CCN2 production in an CXCL8-dependent manner. The protein is Fibrocystin of Mus musculus (Mouse).